A 231-amino-acid polypeptide reads, in one-letter code: U1 small nuclear ribonucleoprotein C-1 (231 aa).

The Matrin-type zinc-finger motif lies at 4–36; the sequence is YYCDYCDTYLTHDSPSVRKQHNAGYKHKANVRT. Pro residues-rich tracts occupy residues 117 to 127, 134 to 159, and 167 to 178; these read APGIPGYPGGP, GAPP…PPGS, and LPRPPTLPPPTS. The segment at 117–231 is disordered; it reads APGIPGYPGG…SYAQPSEGNH (115 aa). Over residues 181 to 193 the composition is skewed to low complexity; that stretch reads PGAPIPNSAAPPA. A compositionally biased stretch (pro residues) spans 199 to 217; the sequence is PPAPAGPTSGAPPAPPTAP.

It belongs to the U1 small nuclear ribonucleoprotein C family. As to quaternary structure, U1 snRNP is composed of the 7 core Sm proteins B/B', D1, D2, D3, E, F and G that assemble in a heptameric protein ring on the Sm site of the small nuclear RNA to form the core snRNP, and at least 3 U1 snRNP-specific proteins U1-70K, U1-A and U1-C. U1-C interacts with U1 snRNA and the 5' splice-site region of the pre-mRNA.

The protein resides in the nucleus. Component of the spliceosomal U1 snRNP, which is essential for recognition of the pre-mRNA 5' splice-site and the subsequent assembly of the spliceosome. U1-C is directly involved in initial 5' splice-site recognition for both constitutive and regulated alternative splicing. The interaction with the 5' splice-site seems to precede base-pairing between the pre-mRNA and the U1 snRNA. Stimulates commitment or early (E) complex formation by stabilizing the base pairing of the 5' end of the U1 snRNA and the 5' splice-site region. This chain is U1 small nuclear ribonucleoprotein C-1, found in Sorghum bicolor (Sorghum).